Reading from the N-terminus, the 1087-residue chain is Synaptopodin-2 (1087 aa).

A PDZ domain is found at Phe-6 to Ser-88. Disordered stretches follow at residues Gly-24–Glu-52, Ser-88–Pro-112, and Gly-207–Pro-272. A compositionally biased stretch (basic and acidic residues) spans Thr-101 to Pro-112. Polar residues-rich tracts occupy residues Gly-207–Glu-230 and Thr-246–Gly-255. Phosphoserine occurs at positions 300, 319, and 320. The disordered stretch occupies residues Ser-320–Val-359. A compositionally biased stretch (basic and acidic residues) spans Gly-322–Arg-337. Thr-323 carries the post-translational modification Phosphothreonine. The span at Pro-338–Leu-348 shows a compositional bias: basic residues. The span at Arg-349–Val-359 shows a compositional bias: basic and acidic residues. The Nuclear localization signal motif lies at Lys-388–Lys-396. Phosphoserine occurs at positions 540, 541, 543, and 546. An interaction with YWHAB region spans residues Arg-551–Pro-557. Ser-555 carries the phosphoserine; by PKA modification. 2 disordered regions span residues Ala-581–Leu-817 and Asn-832–Gly-863. Ser-596 is subject to Phosphoserine. Residues Arg-599–Pro-804 form an interaction with YWHAB region. The residue at position 602 (Thr-602) is a Phosphothreonine; by PKA and CaMK2. A Phosphoserine modification is found at Ser-603. Composition is skewed to pro residues over residues Pro-609–Glu-622 and Ala-636–Trp-647. The PPPY motif signature appears at Pro-611–Tyr-614. Position 614 is a phosphotyrosine (Tyr-614). The residue at position 618 (Ser-618) is a Phosphoserine. The F-actin binding stretch occupies residues Ser-656–Val-796. Residues Ser-656–Asn-909 form an F-actin bundling activity region. Interaction with ACTN2 regions lie at residues Ser-656 to Ala-917 and Gln-894 to Glu-1087. A phosphoserine mark is found at Ser-697 and Ser-719. An actin binding region spans residues Ala-740–Ala-893. Thr-744 is subject to Phosphothreonine. The span at Lys-751–Ala-777 shows a compositional bias: low complexity. Phosphoserine is present on residues Ser-767 and Ser-771. The span at Ala-781–Ser-797 shows a compositional bias: polar residues. The segment at Gln-803–Glu-1087 is interaction with FLNC. A phosphoserine mark is found at Ser-895, Ser-899, and Ser-903. 3 disordered regions span residues Ala-930 to Leu-952, Phe-970 to Ala-1012, and Pro-1037 to Tyr-1060. The interaction with ZYX stretch occupies residues Pro-993–Ala-1012. A phosphoserine mark is found at Ser-1008 and Ser-1050. Residues Pro-1037–Pro-1051 are compositionally biased toward low complexity.

The protein belongs to the synaptopodin family. In terms of assembly, may self-associate in muscle cells under oxidative stress. Binds F-actin. Interacts with ACTN2; ACTN2 is proposed to anchor SYOP2 at Z lines in mature myocytes. Interacts with AKAP6, PPP3CA and CAMK2A. Interacts (phosphorylated form) with YWHAB; YWHAB competes with ACTN2 for interaction with SYNPO2. Interacts with KPNA2; mediating nuclear import of SYNOP2; dependent on interaction with YWHAB. Interacts with IPO13; may be implicated in SYNOP2 nuclear import. Interacts with ZYX, FLNC, ILK. Interacts with BAG3 (via WW 1 domain). May associate with the CASA complex consisting of HSPA8, HSPB8 and BAG3. Interacts with VPS18. Phosphorylated by PKA, and by CaMK2 at multiple sites. Dephosphorylated by calcineurin at Ser-555 and Thr-602; abrogating interaction with YWHAB and impairing nuclear import. Expressed in skeletal muscle, heart, colon, stomach, uterus and lung. Expression is restricted to muscle cell layers in colon, uterus and stomach.

Its subcellular location is the nucleus. The protein resides in the cytoplasm. The protein localises to the myofibril. It is found in the sarcomere. It localises to the z line. Its subcellular location is the cell junction. The protein resides in the focal adhesion. Functionally, has an actin-binding and actin-bundling activity. Can induce the formation of F-actin networks. At the sarcomeric Z lines is proposed to act as adapter protein that links nascent myofibers to the sarcolemma via ZYX and may play a role in early assembly and stabilization of the Z lines. Involved in autophagosome formation. May play a role in chaperone-assisted selective autophagy (CASA) involved in Z lines maintenance in striated muscle under mechanical tension; may link the client-processing CASA chaperone machinery to a membrane-tethering and fusion complex providing autophagosome membranes. Involved in regulation of cell migration. May be a tumor suppressor. In Mus musculus (Mouse), this protein is Synaptopodin-2 (Synpo2).